A 231-amino-acid chain; its full sequence is Large ribosomal subunit protein uL1 (231 aa).

Belongs to the universal ribosomal protein uL1 family. As to quaternary structure, part of the 50S ribosomal subunit.

In terms of biological role, binds directly to 23S rRNA. The L1 stalk is quite mobile in the ribosome, and is involved in E site tRNA release. Functionally, protein L1 is also a translational repressor protein, it controls the translation of the L11 operon by binding to its mRNA. This Thiobacillus denitrificans (strain ATCC 25259 / T1) protein is Large ribosomal subunit protein uL1.